A 514-amino-acid polypeptide reads, in one-letter code: Na(+)/H(+) antiporter NhaB (514 aa).

Helical transmembrane passes span 23 to 43, 63 to 83, 97 to 117, 120 to 140, 144 to 164, 202 to 222, 238 to 258, 303 to 323, 357 to 377, 391 to 411, 447 to 467, and 475 to 495; these read LALL…PFVA, PLLP…TSAA, LLLM…LFIF, LLLS…AAAF, FLDA…FYGI, LMMH…VGEP, FFLR…LTCM, AVIG…VGLI, LTVF…APII, LFYL…VGTI, ATPN…APLI, and VWMA…CVEF.

It belongs to the NhaB Na(+)/H(+) (TC 2.A.34) antiporter family.

The protein resides in the cell inner membrane. It catalyses the reaction 2 Na(+)(in) + 3 H(+)(out) = 2 Na(+)(out) + 3 H(+)(in). Its function is as follows. Na(+)/H(+) antiporter that extrudes sodium in exchange for external protons. The chain is Na(+)/H(+) antiporter NhaB from Salmonella agona (strain SL483).